We begin with the raw amino-acid sequence, 266 residues long: 3-methyl-2-oxobutanoate hydroxymethyltransferase (266 aa).

Mg(2+) is bound by residues aspartate 43 and aspartate 82. Residues 43–44 (DS), aspartate 82, and lysine 110 contribute to the 3-methyl-2-oxobutanoate site. Glutamate 112 is a binding site for Mg(2+). Catalysis depends on glutamate 179, which acts as the Proton acceptor.

It belongs to the PanB family. Homodecamer; pentamer of dimers. The cofactor is Mg(2+).

Its subcellular location is the cytoplasm. It carries out the reaction 3-methyl-2-oxobutanoate + (6R)-5,10-methylene-5,6,7,8-tetrahydrofolate + H2O = 2-dehydropantoate + (6S)-5,6,7,8-tetrahydrofolate. It participates in cofactor biosynthesis; (R)-pantothenate biosynthesis; (R)-pantoate from 3-methyl-2-oxobutanoate: step 1/2. Functionally, catalyzes the reversible reaction in which hydroxymethyl group from 5,10-methylenetetrahydrofolate is transferred onto alpha-ketoisovalerate to form ketopantoate. This is 3-methyl-2-oxobutanoate hydroxymethyltransferase from Psychrobacter cryohalolentis (strain ATCC BAA-1226 / DSM 17306 / VKM B-2378 / K5).